A 125-amino-acid polypeptide reads, in one-letter code: Protein ApaG (125 aa).

The ApaG domain occupies 1-125 (MINAPRVCVQ…FRLAIPSLIH (125 aa)).

The polypeptide is Protein ApaG (Pectobacterium carotovorum subsp. carotovorum (strain PC1)).